The sequence spans 431 residues: 2-oxoisovalerate dehydrogenase subunit alpha, mitochondrial (431 aa).

140–142 (QYR) is a thiamine diphosphate binding site. K(+)-binding residues include serine 189, threonine 194, and glutamine 195.

This sequence belongs to the BCKDHA family. The cofactor is thiamine diphosphate.

It localises to the mitochondrion matrix. It catalyses the reaction N(6)-[(R)-lipoyl]-L-lysyl-[protein] + 3-methyl-2-oxobutanoate + H(+) = N(6)-[(R)-S(8)-2-methylpropanoyldihydrolipoyl]-L-lysyl-[protein] + CO2. It functions in the pathway lipid metabolism; fatty acid biosynthesis. Functionally, the branched-chain alpha-keto dehydrogenase complex catalyzes the overall conversion of alpha-keto acids to acyl-CoA and CO(2). It contains multiple copies of three enzymatic components: branched-chain alpha-keto acid decarboxylase (E1), lipoamide acyltransferase (E2) and lipoamide dehydrogenase (E3). Required for the production of the monomethyl branched-chain fatty acids (mmBCFAs) isopentadecanoate (C15iso) and isoheptadecanoate (C17iso). This Caenorhabditis elegans protein is 2-oxoisovalerate dehydrogenase subunit alpha, mitochondrial.